Reading from the N-terminus, the 931-residue chain is Protein translocase subunit SecA (931 aa).

ATP contacts are provided by residues Gln-87, 105–109 (GEGKT), and Asp-515. The Zn(2+) site is built by Cys-915, Cys-917, Cys-926, and His-927.

Belongs to the SecA family. In terms of assembly, monomer and homodimer. Part of the essential Sec protein translocation apparatus which comprises SecA, SecYEG and auxiliary proteins SecDF-YajC and YidC. Zn(2+) serves as cofactor.

The protein resides in the cell inner membrane. It is found in the cytoplasm. The catalysed reaction is ATP + H2O + cellular proteinSide 1 = ADP + phosphate + cellular proteinSide 2.. In terms of biological role, part of the Sec protein translocase complex. Interacts with the SecYEG preprotein conducting channel. Has a central role in coupling the hydrolysis of ATP to the transfer of proteins into and across the cell membrane, serving both as a receptor for the preprotein-SecB complex and as an ATP-driven molecular motor driving the stepwise translocation of polypeptide chains across the membrane. The chain is Protein translocase subunit SecA from Burkholderia pseudomallei (strain 1106a).